Reading from the N-terminus, the 343-residue chain is Small ribosomal subunit biogenesis GTPase RsgA (343 aa).

One can recognise a CP-type G domain in the interval 116 to 275 (RGQLKPVAAN…LIDSPGIREF (160 aa)). Residues 163-166 (NKAD) and 217-225 (GQSGVGKSS) each bind GTP. The Zn(2+) site is built by Cys299, Cys304, His306, and Cys312.

Belongs to the TRAFAC class YlqF/YawG GTPase family. RsgA subfamily. In terms of assembly, monomer. Associates with 30S ribosomal subunit, binds 16S rRNA. It depends on Zn(2+) as a cofactor.

It is found in the cytoplasm. In terms of biological role, one of several proteins that assist in the late maturation steps of the functional core of the 30S ribosomal subunit. Helps release RbfA from mature subunits. May play a role in the assembly of ribosomal proteins into the subunit. Circularly permuted GTPase that catalyzes slow GTP hydrolysis, GTPase activity is stimulated by the 30S ribosomal subunit. This is Small ribosomal subunit biogenesis GTPase RsgA from Pseudomonas fluorescens (strain ATCC BAA-477 / NRRL B-23932 / Pf-5).